The primary structure comprises 261 residues: Kallikrein-1 (261 aa).

The first 18 residues, 1 to 18, serve as a signal peptide directing secretion; sequence MWFLILFLALSLGRNDAA. Positions 19 to 24 are cleaved as a propeptide — activation peptide; the sequence is PPVQSR. The Peptidase S1 domain maps to 25–258; the sequence is VVGGYNCEMN…FTPWIKEVMK (234 aa). 5 disulfides stabilise this stretch: Cys31–Cys173, Cys50–Cys66, Cys152–Cys219, Cys184–Cys198, and Cys209–Cys234. His65 acts as the Charge relay system in catalysis. Residue Asn108 is glycosylated (N-linked (GlcNAc...) asparagine). Asp120 serves as the catalytic Charge relay system. Ser213 (charge relay system) is an active-site residue.

Belongs to the peptidase S1 family. Kallikrein subfamily. In terms of tissue distribution, high levels in pancreas, submaxillary and parotid glands, spleen, and kidney.

It carries out the reaction Preferential cleavage of Arg-|-Xaa bonds in small molecule substrates. Highly selective action to release kallidin (lysyl-bradykinin) from kininogen involves hydrolysis of Met-|-Xaa or Leu-|-Xaa.. This chain is Kallikrein-1 (Ngfg), found in Rattus norvegicus (Rat).